Here is a 61-residue protein sequence, read N- to C-terminus: MALKITQIKGTVGTKPKHRDNLRSLGLKRIRHTVIRPDTPEVRGMILAVRHLIVVEEVAGE.

It belongs to the universal ribosomal protein uL30 family. As to quaternary structure, part of the 50S ribosomal subunit.

The protein is Large ribosomal subunit protein uL30 of Corynebacterium glutamicum (strain R).